Reading from the N-terminus, the 123-residue chain is Fluoride-specific ion channel FluC 1 (123 aa).

Transmembrane regions (helical) follow at residues 1 to 21, 34 to 54, 59 to 79, and 99 to 119; these read MVDL…RYTL, PLAT…LYGF, VIWL…STYI, and LTSI…ANFF. Gly70 and Thr73 together coordinate Na(+).

Belongs to the fluoride channel Fluc/FEX (TC 1.A.43) family.

It is found in the cell membrane. The enzyme catalyses fluoride(in) = fluoride(out). With respect to regulation, na(+) is not transported, but it plays an essential structural role and its presence is essential for fluoride channel function. Functionally, fluoride-specific ion channel. Important for reducing fluoride concentration in the cell, thus reducing its toxicity. The chain is Fluoride-specific ion channel FluC 1 from Carboxydothermus hydrogenoformans (strain ATCC BAA-161 / DSM 6008 / Z-2901).